Here is a 246-residue protein sequence, read N- to C-terminus: tRNA pseudouridine synthase A (246 aa).

The active-site Nucleophile is Asp53. Tyr112 lines the substrate pocket.

Belongs to the tRNA pseudouridine synthase TruA family. Homodimer.

The catalysed reaction is uridine(38/39/40) in tRNA = pseudouridine(38/39/40) in tRNA. Functionally, formation of pseudouridine at positions 38, 39 and 40 in the anticodon stem and loop of transfer RNAs. In Anaplasma phagocytophilum (strain HZ), this protein is tRNA pseudouridine synthase A.